The chain runs to 830 residues: Nucleolar complex-associated protein 3 (830 aa).

5 disordered regions span residues 1 to 22 (MGKN…DVAE), 67 to 86 (KYEE…GNGE), 112 to 169 (KSKL…EETP), 391 to 436 (GKPN…KIRD), and 802 to 830 (LQSE…KKQI). Coiled coils occupy residues 61–81 (VMTV…LQEE) and 111–156 (KKSK…HEKD). Residues 67–84 (KYEEERSKRKTLQEEKGN) are compositionally biased toward basic and acidic residues. Residues 118–129 (AETDEAEKDVLE) are compositionally biased toward acidic residues. Residues 130–140 (DEHVLNKSQRR) show a composition bias toward basic and acidic residues. The Nuclear localization signal 1 signature appears at 138–145 (QRREKAKK). Positions 141–150 (EKAKKSKREA) are enriched in basic residues. A compositionally biased stretch (acidic residues) spans 159-168 (DEILQEEEET). The span at 391 to 400 (GKPNKEDEHN) shows a compositional bias: basic and acidic residues. A coiled-coil region spans residues 400 to 429 (NKKYKKNNKRKTQEEQNQVQENERKKSKKD). The short motif at 408–415 (KRKTQEEQ) is the Nuclear localization signal 2 element. Basic and acidic residues predominate over residues 420–436 (ENERKKSKKDMMSKIRD). Residues 806-813 (EKKPLKKQ) carry the Nuclear localization signal 3 motif. The segment covering 817-830 (VKKKLKNPKSKKQI) has biased composition (basic residues).

It belongs to the CBF/MAK21 family. Component of nucleolar complexes. Interacts with RBL and NOC2 in both the nucleolus and nucleoplasm.

It localises to the nucleus. The protein resides in the nucleolus. Its subcellular location is the nucleoplasm. Functionally, may be required for synthesis of 60S ribosomal subunits and the transport of pre-ribosomes from the nucleoplasm to the cytoplasm. Also required for initiation of DNA replication. This chain is Nucleolar complex-associated protein 3, found in Arabidopsis thaliana (Mouse-ear cress).